A 227-amino-acid polypeptide reads, in one-letter code: ATP-dependent dethiobiotin synthetase BioD (227 aa).

13 to 18 (DIGKTY) contributes to the ATP binding site. Threonine 17 is a binding site for Mg(2+). The active site involves lysine 38. Serine 42 contributes to the substrate binding site. ATP contacts are provided by residues aspartate 55, 116 to 119 (EGSG), and 179 to 180 (NN). Mg(2+) contacts are provided by aspartate 55 and glutamate 116.

It belongs to the dethiobiotin synthetase family. Homodimer. Mg(2+) serves as cofactor.

It is found in the cytoplasm. The catalysed reaction is (7R,8S)-7,8-diammoniononanoate + CO2 + ATP = (4R,5S)-dethiobiotin + ADP + phosphate + 3 H(+). It functions in the pathway cofactor biosynthesis; biotin biosynthesis; biotin from 7,8-diaminononanoate: step 1/2. Catalyzes a mechanistically unusual reaction, the ATP-dependent insertion of CO2 between the N7 and N8 nitrogen atoms of 7,8-diaminopelargonic acid (DAPA, also called 7,8-diammoniononanoate) to form a ureido ring. This Clostridium botulinum (strain Alaska E43 / Type E3) protein is ATP-dependent dethiobiotin synthetase BioD.